The following is a 945-amino-acid chain: Probable inorganic carbon transporter subunit DabA (945 aa).

Zn(2+)-binding residues include Cys-408, Asp-410, His-651, and Cys-666.

This sequence belongs to the inorganic carbon transporter (TC 9.A.2) DabA family. As to quaternary structure, forms a complex with DabB. Requires Zn(2+) as cofactor.

The protein resides in the cell inner membrane. Functionally, part of an energy-coupled inorganic carbon pump. This Sulfurihydrogenibium azorense (strain DSM 15241 / OCM 825 / Az-Fu1) protein is Probable inorganic carbon transporter subunit DabA.